A 479-amino-acid polypeptide reads, in one-letter code: ATP synthase subunit beta (479 aa).

160 to 167 contributes to the ATP binding site; the sequence is GGAGVGKT.

The protein belongs to the ATPase alpha/beta chains family. F-type ATPases have 2 components, CF(1) - the catalytic core - and CF(0) - the membrane proton channel. CF(1) has five subunits: alpha(3), beta(3), gamma(1), delta(1), epsilon(1). CF(0) has three main subunits: a(1), b(2) and c(9-12). The alpha and beta chains form an alternating ring which encloses part of the gamma chain. CF(1) is attached to CF(0) by a central stalk formed by the gamma and epsilon chains, while a peripheral stalk is formed by the delta and b chains.

It localises to the cell inner membrane. The enzyme catalyses ATP + H2O + 4 H(+)(in) = ADP + phosphate + 5 H(+)(out). Its function is as follows. Produces ATP from ADP in the presence of a proton gradient across the membrane. The catalytic sites are hosted primarily by the beta subunits. The chain is ATP synthase subunit beta from Anaplasma phagocytophilum (strain HZ).